Here is a 225-residue protein sequence, read N- to C-terminus: UPF0758 protein BB3258 (225 aa).

The region spanning 103 to 225 is the MPN domain; it reads ALANPDLVRR…TVSMAAQGHL (123 aa). Zn(2+) is bound by residues His-174, His-176, and Asp-187. A JAMM motif motif is present at residues 174–187; sequence HNHPGGTAAASAAD.

The protein belongs to the UPF0758 family.

The chain is UPF0758 protein BB3258 from Bordetella bronchiseptica (strain ATCC BAA-588 / NCTC 13252 / RB50) (Alcaligenes bronchisepticus).